An 83-amino-acid chain; its full sequence is Hainantoxin-III 9 (83 aa).

Residues 1 to 21 (MKASMFLALAGLALLFVVCYA) form the signal peptide. A propeptide spanning residues 22–48 (SESEEKEFPIELLSKIFAVDVFKGEER) is cleaved from the precursor. Disulfide bonds link Cys-50–Cys-65, Cys-57–Cys-70, and Cys-64–Cys-77. A Leucine amide modification is found at Leu-81.

The protein belongs to the neurotoxin 10 (Hwtx-1) family. 15 (Hntx-3) subfamily. As to quaternary structure, monomer. Expressed by the venom gland.

The protein localises to the secreted. Functionally, selective antagonist of neuronal tetrodotoxin (TTX)-sensitive voltage-gated sodium channels (IC(50)=1270 nM on Nav1.1/SCN1A, 270 nM on Nav1.2/SCN2A, 491 nM on Nav1.3/SCN3A and 232 nM on Nav1.7/SCN9A). This toxin suppress Nav1.7 current amplitude without significantly altering the activation, inactivation, and repriming kinetics. Short extreme depolarizations partially activate the toxin-bound channel, indicating voltage-dependent inhibition of this toxin. This toxin increases the deactivation of the Nav1.7 current after extreme depolarizations. The toxin-Nav1.7 complex is gradually dissociated upon prolonged strong depolarizations in a voltage-dependent manner, and the unbound toxin rebinds to Nav1.7 after a long repolarization. Moreover, analysis of chimeric channels showed that the DIIS3-S4 linker is critical for toxin binding to Nav1.7. These data are consistent with this toxin interacting with Nav1.7 site 4 and trapping the domain II voltage sensor in the closed state. This chain is Hainantoxin-III 9, found in Cyriopagopus hainanus (Chinese bird spider).